The chain runs to 704 residues: Arylphorin (704 aa).

The first 16 residues, 1–16, serve as a signal peptide directing secretion; the sequence is MKIVLVLAGLIALVQS. Residues Asn73, Asn212, and Asn360 are each glycosylated (N-linked (GlcNAc...) asparagine).

This sequence belongs to the hemocyanin family. As to quaternary structure, homohexamer of two stacked trimers; disulfide-linked. Post-translationally, glycosylation at Asn-360 is required for proper folding.

It is found in the secreted. The protein localises to the extracellular space. Its function is as follows. Arylphorin is a larval storage protein (LSP) which may serve as a storage protein used primarily as a source of aromatic amino acids for protein synthesis during metamorphosis. It is a constituent of the sclerotizing system of the cuticle, and serves as a carrier for ecdysteroid hormone. This Antheraea pernyi (Chinese oak silk moth) protein is Arylphorin.